We begin with the raw amino-acid sequence, 770 residues long: Amyloid-beta precursor protein (770 aa).

The signal sequence occupies residues 1-17; the sequence is MLPGLALLLLAAWTARA. At 18-701 the chain is on the extracellular side; the sequence is LEVPTDGNAG…AEDVGSNKGA (684 aa). Residues 28–123 form a GFLD subdomain region; it reads LLAEPQIAMF…PYRCLVGEFV (96 aa). In terms of domain architecture, E1 spans 28 to 189; that stretch reads LLAEPQIAMF…RGVEFVCCPL (162 aa). 6 disulfide bridges follow: C38–C62, C73–C117, C98–C105, C133–C187, C144–C174, and C158–C186. 96–110 contributes to the heparin binding site; sequence NWCKRGRKQCKTHPH. The tract at residues 131–189 is cuBD subdomain; that stretch reads DKCKFLHQERMDVCETHLHWHTVAKETCSEKSTNLHDYGMLLPCGIDKFRGVEFVCCPL. The Cu(2+) site is built by H147, H151, and Y168. Residues 181–188 form a zinc-binding region; the sequence is GVEFVCCP. Zn(2+) contacts are provided by E183, C186, and C187. The segment covering 194–207 has biased composition (acidic residues); sequence DNVDSADAEEDDSD. The segment at 194–284 is disordered; it reads DNVDSADAEE…TTTTTTESVE (91 aa). At S198 the chain carries Phosphoserine; by CK2. S206 is subject to Phosphoserine; by CK1. Sulfotyrosine occurs at positions 217 and 262. Positions 228–264 are enriched in acidic residues; sequence VAEEEEVAEVEEEEADDDEDDEDGDEVEEEAEEPYEE. Low complexity predominate over residues 268–281; sequence RTTSIATTTTTTTE. 3 disulfide bridges follow: C291–C341, C300–C324, and C316–C337. One can recognise a BPTI/Kunitz inhibitor domain in the interval 291–341; the sequence is CSEQAETGPCRAMISRWYFDVTEGKCAPFFYGGCGGNRNNFDTEEYCMAVC. Y336 is modified (sulfotyrosine). An OX-2 motif is present at residues 344 to 365; that stretch reads VMSQSLRKTTREPLTRDPVKLP. In terms of domain architecture, E2 spans 374 to 565; the sequence is AVDKYLETPG…EEIQDEVDEL (192 aa). The tract at residues 391 to 423 is heparin-binding; the sequence is FQKAKERLEAKHRERMSQVMREWEEAERQAKNL. S441 carries the post-translational modification Phosphoserine. Residues 491–522 form a heparin-binding region; that stretch reads FNMLKKYVRAEQKDRQHTLKHFEHVRMVDPKK. Position 497 is a phosphotyrosine (Y497). Residues 523–540 are collagen-binding; that stretch reads AAQIRSQVMTHLRVIYER. N-linked (GlcNAc...) asparagine glycans are attached at residues N542 and N571. Cu(2+) is bound by residues H677, Y681, H684, and H685. Positions 677, 681, 684, and 685 each coordinate Zn(2+). Residues 695–722 are interaction with PSEN1; that stretch reads VGSNKGAIIGLMVGGVVIATVIVITLVM. A helical membrane pass occupies residues 702-722; sequence IIGLMVGGVVIATVIVITLVM. At 723 to 770 the chain is on the cytoplasmic side; sequence LKKKQYTSIHHGVVEVDAAVTPEERHLSKMQQNGYENPTYKFFEQMQN. A Basolateral sorting signal motif is present at residues 724–734; it reads KKKQYTSIHHG. Phosphothreonine is present on T729. At S730 the chain carries Phosphoserine; by APP-kinase I. The interaction with G(o)-alpha stretch occupies residues 732 to 751; the sequence is HHGVVEVDAAVTPEERHLSK. Phosphothreonine; by CDK5 and MAPK10 is present on T743. A required for the interaction with KIF5B and for anterograde transport in axons region spans residues 756-770; the sequence is GYENPTYKFFEQMQN. Y757 is subject to Phosphotyrosine; by ABL1. The YENPXY motif; contains endocytosis signal motif lies at 757 to 762; sequence YENPTY. K763 participates in a covalent cross-link: Glycyl lysine isopeptide (Lys-Gly) (interchain with G-Cter in ubiquitin).

This sequence belongs to the APP family. Binds, via its C-terminus, to the PID domain of several cytoplasmic proteins, including APBB family members, the APBA family, MAPK8IP1, SHC1 and NUMB and DAB1. Binding to DAB1 inhibits its serine phosphorylation. Interacts (via NPXY motif) with DAB2 (via PID domain); the interaction is impaired by tyrosine phosphorylation of the NPXY motif. Also interacts with GPCR-like protein BPP, APPBP1, IB1, KNS2 (via its TPR domains), APPBP2 (via BaSS) and DDB1. In vitro, it binds MAPT via the MT-binding domains. Associates with microtubules in the presence of ATP and in a kinesin-dependent manner. Interacts, through a C-terminal domain, with GNAO1. Amyloid-beta protein 42 binds CHRNA7 in hippocampal neurons. Amyloid-beta associates with HADH2. Interacts with CPEB1, ANKS1B and AGER. Interacts with ITM2B. Interacts with ITM2C. Interacts with IDE. Can form homodimers; dimerization is enhanced in the presence of Cu(2+) ions. Can form homodimers; this is promoted by heparin binding. Amyloid-beta protein 40 interacts with S100A9. CTF-alpha product of APP interacts with GSAP. Isoform APP695 interacts with SORL1 (via N-terminal ectodomain); this interaction retains APP in the trans-Golgi network and reduces processing into soluble APP-alpha and amyloid-beta peptides. Isoform APP770 interacts with SORL1. The C99 fragment also interacts with SORL1. Interacts with PLD3. Interacts with VDAC1. Interacts with NSG1; could regulate APP processing. Amyloid-beta protein 42 interacts with FPR2. Interacts (via transmembrane region) with PSEN1; the interaction is direct. Interacts with LRRK2. Interacts (via cytoplasmic domain) with KIF5B. Interacts (via C-terminus) with APBB2/FE65L1 (via C-terminus). Interacts (via intracellular domain) with APBB3. Post-translationally, proteolytically processed under normal cellular conditions. Cleavage either by alpha-secretase, beta-secretase or theta-secretase leads to generation and extracellular release of soluble APP peptides, S-APP-alpha and S-APP-beta, and the retention of corresponding membrane-anchored C-terminal fragments, C80, C83 and C99. Subsequent processing of C80 and C83 by gamma-secretase yields P3 peptides. This is the major secretory pathway and is non-amyloidogenic. Alternatively, presenilin/nicastrin-mediated gamma-secretase processing of C99 releases the amyloid-beta proteins, amyloid-beta protein 40 and amyloid-beta protein 42, major components of amyloid plaques, and the cytotoxic C-terminal fragments, gamma-CTF(50), gamma-CTF(57) and gamma-CTF(59). PSEN1 cleavage is more efficient with C83 than with C99 as substrate (in vitro). Amyloid-beta protein 40 and Amyloid-beta protein 42 are cleaved by ACE. Many other minor amyloid-beta peptides, amyloid-beta 1-X peptides, are found in cerebral spinal fluid (CSF) including the amyloid-beta X-15 peptides, produced from the cleavage by alpha-secretase. Proteolytically cleaved by caspases during neuronal apoptosis. Cleavage at Asp-739 by either caspase-3, -8 or -9 results in the production of the neurotoxic C31 peptide and the increased production of amyloid-beta peptides. In terms of processing, N- and O-glycosylated. Post-translationally, phosphorylation in the C-terminal on tyrosine, threonine and serine residues is neuron-specific. Phosphorylation can affect APP processing, neuronal differentiation and interaction with other proteins. Phosphorylated on Thr-743 in neuronal cells by Cdc5 kinase and Mapk10, in dividing cells by Cdc2 kinase in a cell-cycle dependent manner with maximal levels at the G2/M phase and, in vitro, by GSK-3-beta. The Thr-743 phosphorylated form causes a conformational change which reduces binding of Fe65 family members. In dopaminergic (DA) neurons, phosphorylation on Thr-743 by LRKK2 promotes the production and the nuclear translocation of the APP intracellular domain (AICD) which induces DA neuron apoptosis. Phosphorylation on Tyr-757 is required for SHC binding. Phosphorylated in the extracellular domain by casein kinases on both soluble and membrane-bound APP. This phosphorylation is inhibited by heparin. Trophic-factor deprivation triggers the cleavage of surface APP by beta-secretase to release sAPP-beta which is further cleaved to release an N-terminal fragment of APP (N-APP). In terms of processing, amyloid-beta peptides are degraded by IDE. Post-translationally, sulfated on tyrosine residues.

The protein resides in the cell membrane. It is found in the membrane. The protein localises to the perikaryon. Its subcellular location is the cell projection. It localises to the growth cone. The protein resides in the clathrin-coated pit. It is found in the early endosome. The protein localises to the cytoplasmic vesicle. Its subcellular location is the endoplasmic reticulum. It localises to the golgi apparatus. The protein resides in the secreted. It is found in the cell surface. The protein localises to the nucleus. Its subcellular location is the cytoplasm. Functions as a cell surface receptor and performs physiological functions on the surface of neurons relevant to neurite growth, neuronal adhesion and axonogenesis. Interaction between APP molecules on neighboring cells promotes synaptogenesis. Involved in cell mobility and transcription regulation through protein-protein interactions. Can promote transcription activation through binding to APBB1-KAT5 and inhibit Notch signaling through interaction with Numb. Couples to apoptosis-inducing pathways such as those mediated by G(o) and JIP. Inhibits G(o)-alpha ATPase activity. Acts as a kinesin I membrane receptor, mediating the axonal transport of beta-secretase and presenilin 1. By acting as a kinesin I membrane receptor, plays a role in axonal anterograde transport of cargo towards synapses in axons. May be involved in copper homeostasis/oxidative stress through copper ion reduction. In vitro, copper-metallated APP induces neuronal death directly or is potentiated through Cu(2+)-mediated low-density lipoprotein oxidation. Can regulate neurite outgrowth through binding to components of the extracellular matrix such as heparin and collagen I and IV. Induces a AGER-dependent pathway that involves activation of p38 MAPK, resulting in internalization of amyloid-beta peptide and mitochondrial dysfunction in cultured cortical neurons. Provides Cu(2+) ions for GPC1 which are required for release of nitric oxide (NO) and subsequent degradation of the heparan sulfate chains on GPC1. Functionally, amyloid-beta peptides are lipophilic metal chelators with metal-reducing activity. Binds transient metals such as copper, zinc and iron. In terms of biological role, the gamma-CTF peptides as well as the caspase-cleaved peptides, including C31, are potent enhancers of neuronal apoptosis. The chain is Amyloid-beta precursor protein from Macaca fascicularis (Crab-eating macaque).